The sequence spans 653 residues: Macrolide export ATP-binding/permease protein MacB (653 aa).

An ABC transporter domain is found at 6–244 (LQLTRVTRRF…DAASGASGDA (239 aa)). 42–49 (GASGSGKS) serves as a coordination point for ATP. A run of 4 helical transmembrane segments spans residues 278-298 (LLTM…VAIG), 526-546 (LTLL…IGVM), 587-607 (MGGA…SLFV), and 616-636 (AGSI…FGFM).

The protein belongs to the ABC transporter superfamily. Macrolide exporter (TC 3.A.1.122) family. In terms of assembly, homodimer.

It localises to the cell inner membrane. Functionally, non-canonical ABC transporter that contains transmembrane domains (TMD), which form a pore in the inner membrane, and an ATP-binding domain (NBD), which is responsible for energy generation. Confers resistance against macrolides. This Burkholderia thailandensis (strain ATCC 700388 / DSM 13276 / CCUG 48851 / CIP 106301 / E264) protein is Macrolide export ATP-binding/permease protein MacB.